The following is a 71-amino-acid chain: SPbeta prophage-derived uncharacterized protein YorP (71 aa).

The chain is SPbeta prophage-derived uncharacterized protein YorP (yorP) from Bacillus subtilis (strain 168).